Reading from the N-terminus, the 591-residue chain is MASLCSNSSTTSLKTPFTSLGSTPKPCQLFLHGKRNKAFKVSCKVTNTNGNQDETNSVDRRNVLLGLGGLYGVANAIPLAASAAPTPPPDLSSCSIARIDENQVVSYSCCAPKPDDMEKVPYYKFPSMTKLRVRQPAHEADEEYIAKYNVSVTKMRDLDKTQPLNPIGFKQQANIHCAYCNGAYRIGGKELQVHNSWLFFPFHRWYLYFYESNAGKLIDDPTFALPYWNWDHPKGMRFPAMYDREGTFLFDETRDQSHRNGTVIDLGFFGNEVETTQLQMMSNNLTLMYRQMVTNAPCPRMFFGDLMISGITLNSPGTIENIPHGPVHIWSGTVRGSTLPNGAISKRGEYGHFYSAGLDPVFFCHHSNVDRMWSEWKATGGKRTDITHKDWLNSEFFFYDENENPYRVKVRDCLDTKKMGYDYKPMRTPWRNFKPLTKASAGKVNTSSIPPVSQAFPLAKLDKAVSFSINRPTSSRTPQEKNAQEEMLTFNSIRYDNRGYIRFDVFLNVDNNVNANELDKAEFAGSYTSLPHVHRAGETNHIATVDFQLAITELLEDIGLEDEDTIAVTLVPKRGGEGISIENATISLADC.

The N-terminal 83 residues, methionine 1–alanine 83, are a transit peptide targeting the chloroplast. Intrachain disulfides connect cysteine 94/cysteine 110 and cysteine 109/cysteine 177. Positions 176, 194, 203, 324, 328, and 366 each coordinate Cu cation. The segment at residues cysteine 180–histidine 194 is a cross-link (2'-(S-cysteinyl)-histidine (Cys-His)).

It belongs to the tyrosinase family. Cu(2+) serves as cofactor.

It localises to the plastid. Its subcellular location is the chloroplast thylakoid lumen. It carries out the reaction 2 catechol + O2 = 2 1,2-benzoquinone + 2 H2O. In terms of biological role, catalyzes the oxidation of mono- and o-diphenols to o-diquinones. The protein is Polyphenol oxidase D, chloroplastic of Solanum lycopersicum (Tomato).